Consider the following 409-residue polypeptide: Histone deacetylase 7 (409 aa).

The histone deacetylase stretch occupies residues 11–324 (RVSYFYEPMI…WCYETAIAVG (314 aa)). The active-site Proton donor/acceptor is the His-148. Asp-267 provides a ligand contact to Zn(2+). Positions 383–409 (PFQDTPSSSQATEAAEVDMEKRNDPRI) are disordered. Residues 384-394 (FQDTPSSSQAT) show a composition bias toward polar residues. Basic and acidic residues predominate over residues 400-409 (DMEKRNDPRI).

Belongs to the histone deacetylase family. HD type 1 subfamily. Zn(2+) is required as a cofactor. Low expression in flowers.

It is found in the nucleus. It carries out the reaction N(6)-acetyl-L-lysyl-[histone] + H2O = L-lysyl-[histone] + acetate. Its function is as follows. Responsible for the deacetylation of lysine residues on the N-terminal part of the core histones (H2A, H2B, H3 and H4). Histone deacetylation gives a tag for epigenetic repression and plays an important role in transcriptional regulation, cell cycle progression and developmental events. May be involved in flowering induction. Histone deacetylases act via the formation of large multiprotein complexes. The chain is Histone deacetylase 7 (HDA7) from Arabidopsis thaliana (Mouse-ear cress).